Consider the following 330-residue polypeptide: 1-aminocyclopropane-1-carboxylate oxidase 2 (330 aa).

Residues 153-253 form the Fe2OG dioxygenase domain; that stretch reads PNFGTKVSNY…RMSIASFYNP (101 aa). Fe cation is bound by residues His-177, Asp-179, and His-234.

This sequence belongs to the iron/ascorbate-dependent oxidoreductase family. Monomer. It depends on Fe cation as a cofactor.

The catalysed reaction is 1-aminocyclopropane-1-carboxylate + L-ascorbate + O2 = ethene + L-dehydroascorbate + hydrogen cyanide + CO2 + 2 H2O. The protein operates within alkene biosynthesis; ethylene biosynthesis via S-adenosyl-L-methionine; ethylene from S-adenosyl-L-methionine: step 2/2. The protein is 1-aminocyclopropane-1-carboxylate oxidase 2 (ACO2) of Malus domestica (Apple).